The sequence spans 284 residues: MKLLILTCLVAAALALPRAHRRNAVSSQTQQENSSSEEQEIVKQPKYLSLNEEFVNNLNRQRELLTEQDNEIKITMDSSAEEQATASAQEDSSSSSSSSEESKDAIPSATEQKNIANKEILNRCTLEQLQRQIKYSQLLQQASLAQQASLAQQASLAQQALLAQQPSLAQQAALAQQASLAQQASLAQQASLAQKHHPRLSQVYYPNMEQPYRMNAYSQVQMRHPMSVVDQAQFSVQSFPQLSQYGAYPLWLYFPQDMQYLTPEAVLNTFKPIAPKDAENTNVW.

The N-terminal stretch at 1-15 (MKLLILTCLVAAALA) is a signal peptide. Disordered stretches follow at residues 21-44 (RRNA…IVKQ) and 78-111 (SSAE…SATE). Low complexity-rich tracts occupy residues 24-36 (AVSS…NSSS) and 78-99 (SSAE…SSSS). Phosphoserine is present on residues Ser79, Ser93, Ser94, Ser95, Ser96, Ser97, Ser98, and Ser99. Repeat copies occupy residues 138 to 143 (LLQQAS), 144 to 149 (LAQQAS), 150 to 155 (LAQQAS), 156 to 161 (LAQQAL), 162 to 167 (LAQQPS), 168 to 173 (LAQQAA), 174 to 179 (LAQQAS), 180 to 185 (LAQQAS), 186 to 191 (LAQQAS), and 192 to 197 (LAQKHH). A 10 X 6 AA tandem repeats region spans residues 138-197 (LLQQASLAQQASLAQQASLAQQALLAQQPSLAQQAALAQQASLAQQASLAQQASLAQKHH).

Belongs to the alpha-casein family. In terms of tissue distribution, mammary gland specific. Secreted in milk.

It localises to the secreted. In terms of biological role, important role in the capacity of milk to transport calcium phosphate. This Rattus norvegicus (Rat) protein is Alpha-S1-casein (Csn1s1).